The chain runs to 4249 residues: Fibrocystin-L (4249 aa).

Residues 1–20 (MGHLWLSGTWFLFGLLWCAA) form the signal peptide. Residues 21 to 4222 (DSHKGSSETI…TPVQTLAVIT (4202 aa)) lie on the Extracellular side of the membrane. 14 consecutive IPT/TIG domains span residues 31 to 132 (PKVT…GVAS), 146 to 255 (PTIR…KMTY), 270 to 361 (PEVV…ILEY), 1067 to 1153 (PLIL…HFIY), 1155 to 1234 (SQIS…SFSY), 1240 to 1323 (PVVT…KLNA), 1329 to 1468 (LEVI…SFSY), 1565 to 1648 (PSII…TLTK), 1658 to 1742 (PNID…SFSY), 1748 to 1827 (PYVT…NLTI), 1830 to 1909 (PAVA…SFTY), 1915 to 1996 (PFLK…AFEY), 1998 to 2084 (LSIQ…LFTY), and 2090 to 2175 (PLIT…DFLY). The PA14 domain occupies 337–492 (PGGRGLKVEV…NVFTEQQTGD (156 aa)). O-linked (GalNAc...) threonine glycosylation is found at threonine 1297 and threonine 1359. Threonine 1838 carries O-linked (GalNAc...) threonine glycosylation. The G8 1 domain occupies 2183–2303 (SSWGGSPPPE…IPVVWTRLTH (121 aa)). PbH1 repeat units lie at residues 2484-2506 (QFKSYVKGCAIHQSYNRAITIHN), 2507-2529 (THHLLVERNIIYDIKGGAFFIED), 2565-2587 (NPNNTIRHNAAAGGTHFGFWYRM), 2664-2686 (GGALQFHNFVMVNNNEAGIETKR), and 2732-2755 (SQGLTVSSVHFMNFDRHACVALGV). The region spanning 3035 to 3173 (SFWQSSPENN…HSVYKTKLLE (139 aa)) is the G8 2 domain. PbH1 repeat units follow at residues 3292 to 3314 (KGNARISNVEFHHSGQEGYRDST), 3354 to 3376 (TDGVDIDDNIIYFTVGEGIRIWG), 3415 to 3437 (GTNTVLQNNVVAGFGRVGYRIDG), 3470 to 3492 (PGCSLIQGFTIWTCWDYGIYFQT), and 3493 to 3514 (TESVHIYNVTLVNNGMSIFSMV). An O-linked (GalNAc...) threonine glycan is attached at threonine 3735. The interval 4183–4208 (LSAQSVPGGSGSSPGSGSSSSGHSKA) is disordered. Residues 4197 to 4208 (GSGSSSSGHSKA) are compositionally biased toward low complexity. The chain crosses the membrane as a helical span at residues 4223–4243 (ACLVGRLLLLEVFMAAVFILN). At 4244-4249 (TTVGIN) the chain is on the cytoplasmic side.

As to expression, expressed in neurons in the hippocampus and the cerebral cortex (at protein level). Transiently expressed at high levels in inner ear hair cells, predominantly in outer hair cells, during early postnatal development (at protein level).

The protein localises to the membrane. The protein resides in the cell projection. It is found in the stereocilium membrane. In terms of biological role, component of hair-cell stereocilia coat. Required for normal hearing. This Mus musculus (Mouse) protein is Fibrocystin-L (Pkhd1l1).